We begin with the raw amino-acid sequence, 255 residues long: 5-oxoprolinase subunit A (255 aa).

This sequence belongs to the LamB/PxpA family. Forms a complex composed of PxpA, PxpB and PxpC.

The catalysed reaction is 5-oxo-L-proline + ATP + 2 H2O = L-glutamate + ADP + phosphate + H(+). In terms of biological role, catalyzes the cleavage of 5-oxoproline to form L-glutamate coupled to the hydrolysis of ATP to ADP and inorganic phosphate. This chain is 5-oxoprolinase subunit A, found in Nitrobacter winogradskyi (strain ATCC 25391 / DSM 10237 / CIP 104748 / NCIMB 11846 / Nb-255).